Here is a 326-residue protein sequence, read N- to C-terminus: Nucleotide sugar transporter SLC35D2 (326 aa).

Topologically, residues 1 to 15 are extracellular; the sequence is MEEPNAAPLPSRLAR. A helical transmembrane segment spans residues 16–36; that stretch reads LLSALFYGTCSFLIVLVNKAL. Residues 37–41 lie on the Cytoplasmic side of the membrane; the sequence is LTTYG. A helical transmembrane segment spans residues 42–62; the sequence is FPSPIVLGIGQMATTIMILYV. Over 63–130 the chain is Extracellular; that stretch reads FKLNKIIHFP…LLEAIILGTQ (68 aa). The chain crosses the membrane as a helical span at residues 131 to 151; that stretch reads YSLNIILSVLAIVLGAFIAAG. Over 152-155 the chain is Cytoplasmic; sequence SDLT. The helical transmembrane segment at 156-176 threads the bilayer; sequence FNLEGYVFVFLNDIFTAANGV. At 177–189 the chain is on the extracellular side; that stretch reads YTKQKMDPKELGK. A helical transmembrane segment spans residues 190–210; it reads YGVLFYNACFMLIPTVIISVS. Residues 211–225 are Cytoplasmic-facing; the sequence is TGDFQQATEFRHWKN. A helical transmembrane segment spans residues 226 to 246; the sequence is VLFIIQFLLSCLLGFLLMYST. The Extracellular portion of the chain corresponds to 247 to 253; sequence ALCSYYN. A helical membrane pass occupies residues 254–276; sequence SALTTAVVGAIKNVSVAYIGMLV. Residues 277–280 are Cytoplasmic-facing; sequence GGDY. Residues 281-303 traverse the membrane as a helical segment; that stretch reads IFSLLNFIGLNICMAGGLRYSFL. The Extracellular portion of the chain corresponds to 304-326; it reads TLSSQLKPKQPVDEESIPLDLKS.

It belongs to the TPT transporter family. SLC35D subfamily.

It is found in the golgi apparatus membrane. The enzyme catalyses UMP(out) + UDP-N-acetyl-alpha-D-glucosamine(in) = UMP(in) + UDP-N-acetyl-alpha-D-glucosamine(out). The catalysed reaction is UMP(out) + UDP-alpha-D-glucose(in) = UMP(in) + UDP-alpha-D-glucose(out). Nucleotide sugar antiporter transporting UDP-N-acetylglucosamine (UDP-GlcNAc) and UDP-glucose (UDP-Glc) from the cytosol into the lumen of the Golgi in exchange of UMP. By supplying UDP-N-acetylglucosamine, a donor substrate to heparan sulfate synthases, probably takes part in the synthesis of these glycoconjugates. This chain is Nucleotide sugar transporter SLC35D2, found in Mus musculus (Mouse).